A 335-amino-acid polypeptide reads, in one-letter code: Probable cytosolic iron-sulfur protein assembly protein Ciao1 (335 aa).

WD repeat units lie at residues 12–51 (GHKG…WSTK), 57–96 (GHKR…FECN), 101–140 (GHEN…EFEC), 146–185 (PHTQ…NDWD), 192–231 (SHTS…NTAG), 250–289 (QHSR…KPDE), and 301–335 (AHDQ…KVTE).

Belongs to the WD repeat CIA1 family. Conjugated to URM1, a ubiquitin-like protein.

In terms of biological role, essential component of the cytosolic iron-sulfur (Fe/S) protein assembly machinery. Required for the maturation of extramitochondrial Fe/S proteins. The chain is Probable cytosolic iron-sulfur protein assembly protein Ciao1 from Drosophila melanogaster (Fruit fly).